The sequence spans 135 residues: Interleukin-4 (135 aa).

An N-terminal signal peptide occupies residues 1 to 24 (MGLTSQLIPVLVCLLVCTSHFVHG). 3 disulfide bridges follow: Cys27–Cys135, Cys48–Cys85, and Cys70–Cys105. Asn62 is a glycosylation site (N-linked (GlcNAc...) asparagine).

It belongs to the IL-4/IL-13 family.

It is found in the secreted. Participates in at least several B-cell activation processes as well as of other cell types. It is a costimulator of DNA-synthesis. It induces the expression of class II MHC molecules on resting B-cells. It enhances both secretion and cell surface expression of IgE and IgG1. It also regulates the expression of the low affinity Fc receptor for IgE (CD23) on both lymphocytes and monocytes. Positively regulates IL31RA expression in macrophages. Stimulates autophagy in dendritic cells by interfering with mTORC1 signaling and through the induction of RUFY4. The chain is Interleukin-4 (IL4) from Bos taurus (Bovine).